A 78-amino-acid polypeptide reads, in one-letter code: RNA-binding protein Hfq (78 aa).

The Sm domain maps to 9 to 69 (DHFLNQLRKE…ISTFAPQRNV (61 aa)).

It belongs to the Hfq family. As to quaternary structure, homohexamer.

Its function is as follows. RNA chaperone that binds small regulatory RNA (sRNAs) and mRNAs to facilitate mRNA translational regulation in response to envelope stress, environmental stress and changes in metabolite concentrations. Also binds with high specificity to tRNAs. The sequence is that of RNA-binding protein Hfq from Halalkalibacterium halodurans (strain ATCC BAA-125 / DSM 18197 / FERM 7344 / JCM 9153 / C-125) (Bacillus halodurans).